The primary structure comprises 797 residues: Short transient receptor potential channel 4-associated protein (797 aa).

An N-acetylalanine modification is found at Ala2. Positions 2 to 400 (AAAPAAAGAG…VLYVLCVLLM (399 aa)) are interaction with TNFRSF1A.

In terms of assembly, component of the DCX(TRPC4AP) E3 ubiquitin ligase complex, at least composed of CUL4A, DDB1, TRPC4AP/TRUSS and RBX1. Interacts with MYC. Constitutively associated with TNFRSF1A. Directly interacts with TRADD, TRAF2, CHUK, IKBKB and IKBKG. Interacts with TRPC1, TRPC4 and TRPC5. Phosphorylated by GSK3B; phosphorylation is required for ubiquitination. In terms of processing, ubiquitinated by a SCF (SKP1-CUL1-F-box protein) E3 ubiquitin-protein ligase containing SKP2, leading to its degradation. Phosphorylation by GSK3B is required for ubiquitination. As to expression, widely expressed, with high levels in heart, liver and testis.

It localises to the cytoplasm. It is found in the perinuclear region. It functions in the pathway protein modification; protein ubiquitination. Its function is as follows. Substrate-recognition component of a DCX (DDB1-CUL4-X-box) E3 ubiquitin-protein ligase complex required for cell cycle control. The DCX(TRPC4AP) complex specifically mediates the polyubiquitination and subsequent degradation of MYC as part of the DesCEND (destruction via C-end degrons) pathway. The DesCEND (destruction via C-end degrons) pathway recognizes a C-degron located at the extreme C terminus of target proteins, leading to their ubiquitination and degradation. The DCX(TRPC4AP) complex specifically recognizes proteins with an arginine at the minus 3 position (R-3 motif) at the C-terminus, such as MYC, leading to their ubiquitination and degradation. Also participates in the activation of NFKB1 in response to ligation of TNFRSF1A, possibly by linking TNFRSF1A to the IKK signalosome. Involved in JNK activation via its interaction with TRAF2. Also involved in elevation of endoplasmic reticulum Ca(2+) storage reduction in response to CHRM1. This Mus musculus (Mouse) protein is Short transient receptor potential channel 4-associated protein.